A 208-amino-acid polypeptide reads, in one-letter code: 2-dehydro-3-deoxy-phosphogluconate aldolase (208 aa).

Glu41 acts as the Proton acceptor in catalysis. Arg45, Thr68, and Lys128 together coordinate pyruvate. Lys128 (schiff-base intermediate with substrate) is an active-site residue.

Belongs to the KHG/KDPG aldolase family. As to quaternary structure, homotrimer.

The protein localises to the cytoplasm. It carries out the reaction 2-dehydro-3-deoxy-6-phospho-D-gluconate = D-glyceraldehyde 3-phosphate + pyruvate. Its pathway is carbohydrate acid metabolism; 2-dehydro-3-deoxy-D-gluconate degradation; D-glyceraldehyde 3-phosphate and pyruvate from 2-dehydro-3-deoxy-D-gluconate: step 2/2. Involved in the degradation of glucose via the Entner-Doudoroff pathway. Catalyzes the reversible, stereospecific retro-aldol cleavage of 2-keto-3-deoxy-6-phosphogluconate (KDPG) to pyruvate and D-glyceraldehyde-3-phosphate. This is 2-dehydro-3-deoxy-phosphogluconate aldolase from Zymomonas mobilis subsp. mobilis (strain ATCC 31821 / ZM4 / CP4).